Reading from the N-terminus, the 497-residue chain is MTNKYLVEGSENELTTKTAAELAGLIHSREVTSREVTQAHLDRIAAVDGDIHAFLHVGQEEALNAADDVDKRLDAGEAPASALAGVPLALKDVFTTTDAPTTAASKMLEGYMSPYDATVTRKIREAGIPILGKTNMDEFAMGSSTENSAYGPTHNPWDLERTAGGSGGGSSAALAAGQAPLAIGTDTGGSIRQPAALTNTVGVKPTYGTVSRYGLIACASSLDQGGPTARTVLDTALLHEVIAGHDAFDATSVNRPVAPVVQAAREGANGDLKGVKVGVVKQFDRDGYQPGVLEAFHASVEQMRSQGAEIVEVDCPHFDDALGAYYLILPCEVSSNLARFDGMRYGLRAGDDGTRSADEVMAYTRAQGFGPEVKRRIILGTYALSVGYYDAYYLQAQRVRTLIAQDFAKAYEQVDILVSPTTPTTAFKLGEKVTDPLEMYNFDLCTLPLNLAGLAGMSLPSGLASDTGLPVGLQLMAPAFQDDRLYRVGAAFEAGRK.

Catalysis depends on charge relay system residues lysine 91 and serine 166. Residues 143 to 171 (SSTENSAYGPTHNPWDLERTAGGSGGGSS) are disordered. The active-site Acyl-ester intermediate is serine 190.

It belongs to the amidase family. GatA subfamily. As to quaternary structure, heterotrimer of A, B and C subunits.

It carries out the reaction L-glutamyl-tRNA(Gln) + L-glutamine + ATP + H2O = L-glutaminyl-tRNA(Gln) + L-glutamate + ADP + phosphate + H(+). Its function is as follows. Allows the formation of correctly charged Gln-tRNA(Gln) through the transamidation of misacylated Glu-tRNA(Gln) in organisms which lack glutaminyl-tRNA synthetase. The reaction takes place in the presence of glutamine and ATP through an activated gamma-phospho-Glu-tRNA(Gln). In Corynebacterium glutamicum (strain ATCC 13032 / DSM 20300 / JCM 1318 / BCRC 11384 / CCUG 27702 / LMG 3730 / NBRC 12168 / NCIMB 10025 / NRRL B-2784 / 534), this protein is Glutamyl-tRNA(Gln) amidotransferase subunit A.